The sequence spans 149 residues: UPF0336 protein Lxx02810 (149 aa).

Belongs to the UPF0336 family.

This chain is UPF0336 protein Lxx02810, found in Leifsonia xyli subsp. xyli (strain CTCB07).